The primary structure comprises 118 residues: Fluoride-specific ion channel FluC 1 (118 aa).

Transmembrane regions (helical) follow at residues 5 to 25 and 47 to 67; these read FLLVGFGAALGAMLRYGISVL and FLLGFLVSSALGPVWQLFLGT. Residues glycine 71 and threonine 74 each coordinate Na(+). A helical transmembrane segment spans residues 98–118; sequence YLGFTYVFGLIAAFLGMMLGV.

Belongs to the fluoride channel Fluc/FEX (TC 1.A.43) family.

It localises to the cell membrane. It catalyses the reaction fluoride(in) = fluoride(out). Its activity is regulated as follows. Na(+) is not transported, but it plays an essential structural role and its presence is essential for fluoride channel function. Functionally, fluoride-specific ion channel. Important for reducing fluoride concentration in the cell, thus reducing its toxicity. The polypeptide is Fluoride-specific ion channel FluC 1 (Listeria monocytogenes serovar 1/2a (strain ATCC BAA-679 / EGD-e)).